A 148-amino-acid polypeptide reads, in one-letter code: Short form salivary protein D7S1 (148 aa).

The N-terminal stretch at 1 to 21 (MKQNVFFLIAYFSLVFCMCNA) is a signal peptide. Intrachain disulfides connect Cys28/Cys61, Cys41/Cys147, and Cys103/Cys119.

The protein belongs to the PBP/GOBP family. As to expression, female salivary gland.

The protein resides in the secreted. Functionally, in contrast to the related D7 salivary proteins that can bind biogenic amines, does not bind serotonin. The chain is Short form salivary protein D7S1 from Aedes aegypti (Yellowfever mosquito).